The sequence spans 596 residues: Protein kinase C iota type (596 aa).

Over residues 1–12 the composition is skewed to polar residues; sequence MPTQRDSSTMSH. Residues 1-23 are disordered; sequence MPTQRDSSTMSHTVAGGGSGDHS. Proline 2 bears the N-acetylproline mark. The interval 2–28 is required for interaction with RAB2; that stretch reads PTQRDSSTMSHTVAGGGSGDHSHQVRV. Residues 2-253 form a regulatory domain region; the sequence is PTQRDSSTMS…KASSSLGLQD (252 aa). Threonine 3 is modified (phosphothreonine). Phosphoserine is present on residues serine 7 and serine 8. Threonine 9 carries the phosphothreonine modification. In terms of domain architecture, PB1 spans 25 to 108; it reads QVRVKAYYRG…SELLIHVFPC (84 aa). Positions 72–91 are interaction with PARD6A; sequence DEEGDPCTVSSQLELEEAFR. The short motif at 125-134 is the Pseudosubstrate element; the sequence is YRRGARRWRK. Residues 140 to 190 form a Phorbol-ester/DAG-type zinc finger; sequence GHTFQAKRFNRRAHCAICTDRIWGLGRQGYKCINCKLLVHKKCHKLVTIEC. Residues 221-246 are disordered; the sequence is PSSHESLDQVGEEKEAMNTRESGKAS. Residues 225-243 show a composition bias toward basic and acidic residues; that stretch reads ESLDQVGEEKEAMNTRESG. The Protein kinase domain occupies 254-522; sequence FDLLRVIGRG…FADIQGHPFF (269 aa). 260–268 provides a ligand contact to ATP; that stretch reads IGRGSYAKV. Phosphotyrosine; by SRC occurs at positions 265 and 280. An ATP-binding site is contributed by lysine 283. Tyrosine 334 carries the phosphotyrosine; by SRC modification. The active-site Proton acceptor is aspartate 378. A Phosphothreonine; by PDPK1 modification is found at threonine 412. Residues 523–594 enclose the AGC-kinase C-terminal domain; the sequence is RNVDWDMMEQ…INPLLMSAEE (72 aa). Threonine 564 carries the phosphothreonine modification.

It belongs to the protein kinase superfamily. AGC Ser/Thr protein kinase family. PKC subfamily. As to quaternary structure, forms a complex with SQSTM1 and MP2K5. Interacts directly with SQSTM1. Interacts with IKBKB. Interacts with PARD6A, PARD6B and PARD6G. Part of a quaternary complex containing aPKC, PARD3, a PARD6 protein (PARD6A, PARD6B or PARD6G) and a GTPase protein (CDC42 or RAC1). Part of a complex with LLGL1 and PARD6B. Interacts with ADAP1/CENTA1. Interaction with SMG1, through the ZN-finger domain, activates the kinase activity. Interacts with CDK7. Forms a complex with RAB2A and GAPDH involved in recruitment onto the membrane of vesicular tubular clusters (VTCs). Interacts with ECT2 ('Thr-359' phosphorylated form). Interacts with VAMP2. Interacts with WDFY2 (via WD repeats 1-3). Phosphorylation at Thr-412 in the activation loop is not mandatory for activation. Upon neuronal growth factor (NGF) stimulation, phosphorylated by SRC at Tyr-265, Tyr-280 and Tyr-334. Phosphorylation at Tyr-265 facilitates binding to KPNB1/importin-beta regulating entry of PRKCI into the nucleus. Phosphorylation on Tyr-334 is important for NF-kappa-B stimulation. Phosphorylated at Thr-564 during the initial phase of long term potentiation.

The protein localises to the cytoplasm. It is found in the membrane. The protein resides in the endosome. Its subcellular location is the nucleus. The catalysed reaction is L-seryl-[protein] + ATP = O-phospho-L-seryl-[protein] + ADP + H(+). The enzyme catalyses L-threonyl-[protein] + ATP = O-phospho-L-threonyl-[protein] + ADP + H(+). Its activity is regulated as follows. Atypical PKCs (PRKCI and PRKCZ) exhibit an elevated basal enzymatic activity (that may be due to the interaction with SMG1 or SQSTM1) and are not regulated by diacylglycerol, phosphatidylserine, phorbol esters or calcium ions. Two specific sites, Thr-412 (activation loop of the kinase domain) and Thr-564 (turn motif), need to be phosphorylated for its full activation. Might also be a target for novel lipid activators that are elevated during nutrient-stimulated insulin secretion. Calcium- and diacylglycerol-independent serine/ threonine-protein kinase that plays a general protective role against apoptotic stimuli, is involved in NF-kappa-B activation, cell survival, differentiation and polarity, and contributes to the regulation of microtubule dynamics in the early secretory pathway. Is necessary for BCR-ABL oncogene-mediated resistance to apoptotic drug in leukemia cells, protecting leukemia cells against drug-induced apoptosis. In cultured neurons, prevents amyloid beta protein-induced apoptosis by interrupting cell death process at a very early step. In glioblastoma cells, may function downstream of phosphatidylinositol 3-kinase (PI(3)K) and PDPK1 in the promotion of cell survival by phosphorylating and inhibiting the pro-apoptotic factor BAD. Can form a protein complex in non-small cell lung cancer (NSCLC) cells with PARD6A and ECT2 and regulate ECT2 oncogenic activity by phosphorylation, which in turn promotes transformed growth and invasion. In response to nerve growth factor (NGF), acts downstream of SRC to phosphorylate and activate IRAK1, allowing the subsequent activation of NF-kappa-B and neuronal cell survival. Functions in the organization of the apical domain in epithelial cells by phosphorylating EZR. This step is crucial for activation and normal distribution of EZR at the early stages of intestinal epithelial cell differentiation. Forms a protein complex with LLGL1 and PARD6B independently of PARD3 to regulate epithelial cell polarity. Plays a role in microtubule dynamics in the early secretory pathway through interaction with RAB2A and GAPDH and recruitment to vesicular tubular clusters (VTCs). In human coronary artery endothelial cells (HCAEC), is activated by saturated fatty acids and mediates lipid-induced apoptosis. Involved in early synaptic long term potentiation phase in CA1 hippocampal cells and short term memory formation. In Pongo abelii (Sumatran orangutan), this protein is Protein kinase C iota type (PRKCI).